The primary structure comprises 900 residues: DNA polymerase nu (900 aa).

The segment covering 60–75 (LEDRKTQSPEKKDLKS) has biased composition (basic and acidic residues). Disordered stretches follow at residues 60–90 (LEDRKTQSPEKKDLKSLRSQTSRGSAKLSPQ) and 863–900 (GPPPGPCRTESPSNSLAAPGSPASTQPPPLHFSPSFCL). Residues 76-90 (LRSQTSRGSAKLSPQ) are compositionally biased toward polar residues.

Belongs to the DNA polymerase type-A family. As to quaternary structure, interacts with FANCD2, FANCI, PCNA, RAD51 and HELQ. As to expression, highly expressed in testis and heart. Weakly expressed in skeletal muscle.

The protein resides in the nucleus. It carries out the reaction DNA(n) + a 2'-deoxyribonucleoside 5'-triphosphate = DNA(n+1) + diphosphate. Its activity is regulated as follows. Inhibited by ddTTP. Functionally, DNA polymerase with very low fidelity that catalyzes considerable misincorporation by inserting dTTP opposite a G template, and dGTP opposite a T template. Is the least accurate of the DNA polymerase A family (i.e. POLG, POLN and POLQ). Can perform accurate translesion DNA synthesis (TLS) past a 5S-thymine glycol. Can perform efficient strand displacement past a nick or a gap and gives rise to an amount of product similar to that on non-damaged template. Has no exonuclease activity. Error-prone DNA polymerase that preferentially misincorporates dT regardless of template sequence. May play a role in TLS during interstrand cross-link (ICL) repair. May be involved in TLS when genomic replication is blocked by extremely large major groove DNA lesions. May function in the bypass of some DNA-protein and DNA-DNA cross-links. May have a role in cellular tolerance to DNA cross-linking agents. Involved in the repair of DNA cross-links and double-strand break (DSB) resistance. Participates in FANCD2-mediated repair. Forms a complex with HELQ helicase that participates in homologous recombination (HR) repair and is essential for cellular protection against DNA cross-links. This chain is DNA polymerase nu (POLN), found in Homo sapiens (Human).